Reading from the N-terminus, the 716-residue chain is ATP-dependent DNA helicase DinG (716 aa).

The region spanning 17–294 is the Helicase ATP-binding domain; the sequence is ALQEQIPDFI…TCMEQFRPKT (278 aa). 54–61 is a binding site for ATP; it reads APTGVGKT. Residue Cys120 coordinates [4Fe-4S] cluster. The short motif at 131-134 is the DEAH box element; sequence EPTQ. [4Fe-4S] cluster-binding residues include Cys194, Cys199, and Cys205. The DEAH box signature appears at 248-251; sequence DEGH. Residues 517 to 698 enclose the Helicase C-terminal domain; that stretch reads HIAEMAAFFR…VFPIEQPEVP (182 aa).

Belongs to the helicase family. DinG subfamily. Type 1 sub-subfamily. Requires [4Fe-4S] cluster as cofactor.

The catalysed reaction is Couples ATP hydrolysis with the unwinding of duplex DNA at the replication fork by translocating in the 5'-3' direction. This creates two antiparallel DNA single strands (ssDNA). The leading ssDNA polymer is the template for DNA polymerase III holoenzyme which synthesizes a continuous strand.. It carries out the reaction ATP + H2O = ADP + phosphate + H(+). In terms of biological role, DNA-dependent ATPase and 5'-3' DNA helicase. Unwinds D-loops, R-loops, forked DNA and G-quadruplex DNA. The polypeptide is ATP-dependent DNA helicase DinG (Escherichia coli O6:H1 (strain CFT073 / ATCC 700928 / UPEC)).